The following is a 207-amino-acid chain: Thymidylate kinase (207 aa).

Residue 12-19 coordinates ATP; the sequence is GVDGAGKS.

It belongs to the thymidylate kinase family.

The enzyme catalyses dTMP + ATP = dTDP + ADP. Functionally, phosphorylation of dTMP to form dTDP in both de novo and salvage pathways of dTTP synthesis. This is Thymidylate kinase from Bordetella petrii (strain ATCC BAA-461 / DSM 12804 / CCUG 43448).